Consider the following 259-residue polypeptide: Protein-tyrosine phosphatase RolB (259 aa).

The disordered stretch occupies residues 219–259 (GISRPAASSPEPDLTLRLSGPDQEGEEGVMKPAAVNLKKEA).

The enzyme catalyses O-phospho-L-tyrosyl-[protein] + H2O = L-tyrosyl-[protein] + phosphate. Induces differentiation and growth of neoplastic roots (hairy roots). Seems to function as a tyrosine phosphatase. This chain is Protein-tyrosine phosphatase RolB (rolB), found in Rhizobium rhizogenes (Agrobacterium rhizogenes).